We begin with the raw amino-acid sequence, 250 residues long: Triosephosphate isomerase (250 aa).

Residue 9 to 11 (NWK) coordinates substrate. His95 functions as the Electrophile in the catalytic mechanism. Glu167 serves as the catalytic Proton acceptor. Residues Gly173, Ser213, and 234–235 (GG) each bind substrate.

It belongs to the triosephosphate isomerase family. In terms of assembly, homodimer.

The protein resides in the cytoplasm. It carries out the reaction D-glyceraldehyde 3-phosphate = dihydroxyacetone phosphate. Its pathway is carbohydrate biosynthesis; gluconeogenesis. The protein operates within carbohydrate degradation; glycolysis; D-glyceraldehyde 3-phosphate from glycerone phosphate: step 1/1. Involved in the gluconeogenesis. Catalyzes stereospecifically the conversion of dihydroxyacetone phosphate (DHAP) to D-glyceraldehyde-3-phosphate (G3P). This Flavobacterium psychrophilum (strain ATCC 49511 / DSM 21280 / CIP 103535 / JIP02/86) protein is Triosephosphate isomerase.